Consider the following 908-residue polypeptide: Glutamate receptor ionotropic, kainate 2 (908 aa).

Residues 1-31 form the signal peptide; it reads MKIIFPILSNPVFRRTVKLLLCLLWIGYSQG. At 32–561 the chain is on the extracellular side; that stretch reads TTHVLRFGGI…VFSFLNPLSP (530 aa). N-linked (GlcNAc...) asparagine glycans are attached at residues Asn67, Asn73, Asn275, Asn378, Asn412, Asn423, and Asn430. Residues Cys96 and Cys347 are joined by a disulfide bond. 3 residues coordinate L-glutamate: Pro516, Ala518, and Arg523. N-linked (GlcNAc...) asparagine glycosylation occurs at Asn546. Residues 562 to 582 traverse the membrane as a helical segment; sequence DIWMYVLLACLGVSCVLFVIA. The Cytoplasmic portion of the chain corresponds to 583–638; it reads RFSPYEWYNPHPCNPDSDVVENNFTLLNSFWFGVGALMRQGSELMPKALSTRIVGG. Residues 639 to 659 form a helical membrane-spanning segment; it reads IWWFFTLIIISSYTANLAAFL. Residues 660 to 819 lie on the Extracellular side of the membrane; sequence TVERMESPID…KEASALGVQN (160 aa). Residues Ala689, Thr690, and Glu738 each contribute to the L-glutamate site. Cys750 and Cys804 are joined by a disulfide. Asn751 carries N-linked (GlcNAc...) asparagine glycosylation. The chain crosses the membrane as a helical span at residues 820 to 840; sequence IGGIFIVLAAGLVLSVFVAVG. Over 841 to 908 the chain is Cytoplasmic; sequence EFLYKSKKNA…RRLPGKETMA (68 aa). Phosphoserine; by PKC is present on residues Ser846 and Ser868. A Glycyl lysine isopeptide (Lys-Gly) (interchain with G-Cter in SUMO1) cross-link involves residue Lys886.

Belongs to the glutamate-gated ion channel (TC 1.A.10.1) family. GRIK2 subfamily. As to quaternary structure, homotetramer and heterotetramer with GRIK5. Tetramers may be formed by the dimerization of dimers. Assembles into a kainate-gated homomeric channel that does not bind AMPA. Can form functional heteromeric receptors with GRIK3, GRIK4 and GRIK5. Interacts with NETO2. Interacts with DLG4. Interacts with NETO2. Interacts (via C-terminus) with KLHL17 (via kelch repeats); the interaction targets GRIK2 for degradation via ubiquitin-proteasome pathway. In terms of processing, sumoylation mediates kainate receptor-mediated endocytosis and regulates synaptic transmission. Sumoylation is enhanced by PIAS3 and desumoylated by SENP1. Post-translationally, ubiquitinated. Ubiquitination regulates the GRIK2 levels at the synapse by leading kainate receptor degradation through proteasome. Phosphorylated by PKC at Ser-868 upon agonist activation, this directly enhance sumoylation.

The protein localises to the cell membrane. Its subcellular location is the postsynaptic cell membrane. It catalyses the reaction Ca(2+)(in) = Ca(2+)(out). The catalysed reaction is Na(+)(in) = Na(+)(out). Cold receptor activity activated by temperatures between 10-19 degrees Celsius. Its function is as follows. Ionotropic glutamate receptor that functions as a cation-permeable ligand-gated ion channel, gated by L-glutamate and the glutamatergic agonist kainic acid. L-glutamate acts as an excitatory neurotransmitter at many synapses in the central nervous system. Binding of the excitatory neurotransmitter L-glutamate induces a conformation change, leading to the opening of the cation channel, and thereby converts the chemical signal to an electrical impulse. The receptor then desensitizes rapidly and enters a transient inactive state, characterized by the presence of bound agonist. Modulates cell surface expression of NETO2. In association with GRIK3, involved in presynaptic facilitation of glutamate release at hippocampal mossy fiber synapses. Independent of its ionotropic glutamate receptor activity, acts as a thermoreceptor conferring sensitivity to cold temperatures. Functions in dorsal root ganglion neurons. In Macaca fascicularis (Crab-eating macaque), this protein is Glutamate receptor ionotropic, kainate 2 (GRIK2).